Consider the following 1302-residue polypeptide: Vascular endothelial growth factor receptor kdr-like (1302 aa).

The first 28 residues, 1–28 (MTPLKTSVKAFFTLHVLFSCISHGLVEG), serve as a signal peptide directing secretion. Residues 29-740 (SRLPDPQLLP…GEDGKPNIEV (712 aa)) lie on the Extracellular side of the membrane. Ig-like C2-type domains follow at residues 34–115 (PQLL…HEVS), 143–206 (DPYF…VDNA), 222–318 (KNLA…TKVI), 326–412 (NVTH…ISYK), 419–542 (PKIF…FYVD), 545–636 (PQPF…SALT), and 643–728 (PWLM…AVIT). Intrachain disulfides connect C55–C104 and C150–C199. N69 and N97 each carry an N-linked (GlcNAc...) asparagine glycan. N242, N265, N291, N326, N370, N380, N408, N453, N466, N505, N517, N532, N607, N611, N630, N648, and N655 each carry an N-linked (GlcNAc...) asparagine glycan. C243 and C302 are joined by a disulfide. A disulfide bridge connects residues C444 and C524. Residues C565 and C618 are joined by a disulfide bond. C664 and C712 are joined by a disulfide. The chain crosses the membrane as a helical span at residues 741–761 (IILVSTGAAATFLWIMLILFI). Residues 762-1302 (RKLRKPSSAD…YVVRYSTPPV (541 aa)) lie on the Cytoplasmic side of the membrane. The Protein kinase domain maps to 809–1139 (LRLGKTLGHG…ELVERLGDLL (331 aa)). ATP-binding positions include 815-823 (LGHGAFGKV) and K843. The active-site Proton acceptor is D1003. Phosphotyrosine; by autocatalysis occurs at positions 1029, 1034, and 1150. Disordered regions lie at residues 1159 to 1179 (TKADPSNQSPTEETSTRPVSL) and 1266 to 1292 (PLVPSLSLEDSSLDSEMECHSPPPDYN). Residues 1162–1176 (DPSNQSPTEETSTRP) are compositionally biased toward polar residues.

This sequence belongs to the protein kinase superfamily. Tyr protein kinase family. CSF-1/PDGF receptor subfamily. As to quaternary structure, interacts with isoform VEGF165 of vegfaa and isoform VEGF171 of vegfab. Phosphorylated and activated by vegfaa and vegfab. In terms of tissue distribution, first expressed in embryos between 5- and 7-somites. At 7 somites, expressed in discrete bilateral stripes both anteriorly and posteriorly, and in a transverse ectodermal stripe in the hindbrain. From 7-somites, expression seems to extend caudally from the head, and in both directions in the trunk region, until by 20-somites, expression is detected as a continuous band from the anterior head region to the tailbud. Concurrently, cells expressing kdrl in the mid- and posterior trunk regions converge medially. By 24 hours post-fertilization (hpf), expressed in all the endothelial cells lining the vasculature.

The protein localises to the cell membrane. The enzyme catalyses L-tyrosyl-[protein] + ATP = O-phospho-L-tyrosyl-[protein] + ADP + H(+). Receptor for VEGF or VEGFC. Has a tyrosine-protein kinase activity. Combinations of multiple VEGF receptors are required for development of different blood vessel types in the embryo. Involved in angiogenesis, specifically in VEGF-induced sprouting of new blood vessels. Particularly involved in artery formation. Does not appear to be required for hematopoiesis. This is Vascular endothelial growth factor receptor kdr-like (kdrl) from Danio rerio (Zebrafish).